Here is a 330-residue protein sequence, read N- to C-terminus: Phosphate acyltransferase (330 aa).

The protein belongs to the PlsX family. In terms of assembly, homodimer. Probably interacts with PlsY.

The protein localises to the cytoplasm. It carries out the reaction a fatty acyl-[ACP] + phosphate = an acyl phosphate + holo-[ACP]. The protein operates within lipid metabolism; phospholipid metabolism. In terms of biological role, catalyzes the reversible formation of acyl-phosphate (acyl-PO(4)) from acyl-[acyl-carrier-protein] (acyl-ACP). This enzyme utilizes acyl-ACP as fatty acyl donor, but not acyl-CoA. The polypeptide is Phosphate acyltransferase (Streptococcus agalactiae serotype III (strain NEM316)).